The following is a 786-amino-acid chain: Aculeacin-A acylase (786 aa).

A signal peptide spans 1 to 22 (MTSSYMRLKAAAIAFGVIVATA). A propeptide spanning residues 23–34 (AVPSPASGREHD) is cleaved from the precursor. The interval 35–130 (GGYAALIRRA…PRDGVRAPCD (96 aa)) is substrate-binding. Residues 215–229 (AAIAAALDGTSAGIG) constitute a propeptide, spacer peptide. The possible recognition-sequence of an AAC processing enzyme stretch occupies residues 220-239 (ALDGTSAGIGSNAYGLGAQA). S230 serves as the catalytic Nucleophile. Residues 658-689 (ACNGSPASPSTRSVGDIHTDSRGERRIPIHGG) are disordered. Residues 672-684 (GDIHTDSRGERRI) show a composition bias toward basic and acidic residues.

Belongs to the peptidase S45 family. As to quaternary structure, heterodimer of a small subunit and a large subunit processed from the same precursor.

It localises to the secreted. Catalyzes the hydrolysis of the palmitoyl moiety of the antifungal antibiotic, aculeacin-A, giving a hexapeptide moiety and a long chain fatty acid. The polypeptide is Aculeacin-A acylase (aac) (Actinoplanes utahensis).